A 230-amino-acid polypeptide reads, in one-letter code: MVKLVFARHGESEWNKANLFTGWADVDLSEKGTQQAIDAGKLIKEAGIKFDQAYTSVLKRAIKTTNLALEASDQLWVPVEKSWRLNERHYGGLTGKNKAEAAEQFGDEQVHIWRRSYDVLPPNMDRDDEHSAHTDRRYASLDDSVIPDAENLKVTLERALPFWEDKIAPALKDGKNVFVGAHGNSIRALVKHIKGLSDDEIMDVEIPNFPPLVFEFDEKLNVVSEYYLGK.

Substrate-binding positions include 8-15 (RHGESEWN), 21-22 (TG), Arg60, 87-90 (ERHY), Lys98, 114-115 (RR), and 183-184 (GN). His9 functions as the Tele-phosphohistidine intermediate in the catalytic mechanism. The Proton donor/acceptor role is filled by Glu87.

It belongs to the phosphoglycerate mutase family. BPG-dependent PGAM subfamily.

It catalyses the reaction (2R)-2-phosphoglycerate = (2R)-3-phosphoglycerate. It functions in the pathway carbohydrate degradation; glycolysis; pyruvate from D-glyceraldehyde 3-phosphate: step 3/5. Functionally, catalyzes the interconversion of 2-phosphoglycerate and 3-phosphoglycerate. The sequence is that of 2,3-bisphosphoglycerate-dependent phosphoglycerate mutase from Streptococcus pneumoniae (strain P1031).